A 103-amino-acid polypeptide reads, in one-letter code: Large ribosomal subunit protein bL21 (103 aa).

The protein belongs to the bacterial ribosomal protein bL21 family. Part of the 50S ribosomal subunit. Contacts protein L20.

This protein binds to 23S rRNA in the presence of protein L20. The protein is Large ribosomal subunit protein bL21 of Maridesulfovibrio salexigens (strain ATCC 14822 / DSM 2638 / NCIMB 8403 / VKM B-1763) (Desulfovibrio salexigens).